A 545-amino-acid chain; its full sequence is Capsular polysaccharide phosphotransferase SacB (545 aa).

The protein belongs to the stealth family.

Its function is as follows. May be the polymerase that links individual UDP-N-acetyl-D-mannosamine monomers. In serotype A the capsule is composed of repeated units of (alpha 1-6)-linked N-acetyl-D-mannosamine-1-phosphate. The chain is Capsular polysaccharide phosphotransferase SacB (sacB) from Neisseria meningitidis serogroup A.